We begin with the raw amino-acid sequence, 69 residues long: Putative membrane protein insertion efficiency factor (69 aa).

It belongs to the UPF0161 family.

It is found in the cell membrane. Functionally, could be involved in insertion of integral membrane proteins into the membrane. This Clostridium botulinum (strain 657 / Type Ba4) protein is Putative membrane protein insertion efficiency factor.